A 238-amino-acid chain; its full sequence is Ribonuclease PH (238 aa).

Residues R86 and 124-126 contribute to the phosphate site; that span reads GTR.

It belongs to the RNase PH family. Homohexameric ring arranged as a trimer of dimers.

The enzyme catalyses tRNA(n+1) + phosphate = tRNA(n) + a ribonucleoside 5'-diphosphate. In terms of biological role, phosphorolytic 3'-5' exoribonuclease that plays an important role in tRNA 3'-end maturation. Removes nucleotide residues following the 3'-CCA terminus of tRNAs; can also add nucleotides to the ends of RNA molecules by using nucleoside diphosphates as substrates, but this may not be physiologically important. Probably plays a role in initiation of 16S rRNA degradation (leading to ribosome degradation) during starvation. This chain is Ribonuclease PH, found in Brucella melitensis biotype 2 (strain ATCC 23457).